The following is a 504-amino-acid chain: MTLYLDGETLTIEDIKSFLQQQSKVEIIDDALERVKKSRAVVERIIENEETVYGITTGFGLFSDVRIDPTQYNELQVNLIRSHACGLGEPFSKEVALVMMILRLNTLLKGHSGATLELVRQLQFFINERIIPIIPQQGSLGASGDLAPLSHLALALIGEGKVLHRGEEKDSDDVLRELNRQPLNLQAKEGLALINGTQAMTAQGVISYIEAEDLGYQSEWIAALTHQSLNGIIDAYRHDVHAVRNFQEQINVAARMRDWLEGSTLTTRQAEIRVQDAYTLRCIPQIHGASFQVFNYVKQQLEFEMNAANDNPLIFEEVNETFVISGGNFHGQPIAFALDHLKLGVSELANVSERRLERLVNPQLNGDLPAFLSPEPGLQSGAMIMQYAAASLVSENKTLAHPASVDSITSSANQEDHVSMGTTAARHGYQIIENTRRVLAIECVIALQATELKGVEGLSPKTRRKYDEFRSIVPSITHDRQFHRDIEAVAQYLKQSIYQTTACH.

Positions 142–144 (ASG) form a cross-link, 5-imidazolinone (Ala-Gly). Serine 143 bears the 2,3-didehydroalanine (Ser) mark.

The protein belongs to the PAL/histidase family. Post-translationally, contains an active site 4-methylidene-imidazol-5-one (MIO), which is formed autocatalytically by cyclization and dehydration of residues Ala-Ser-Gly.

It is found in the cytoplasm. The catalysed reaction is L-histidine = trans-urocanate + NH4(+). It functions in the pathway amino-acid degradation; L-histidine degradation into L-glutamate; N-formimidoyl-L-glutamate from L-histidine: step 1/3. The polypeptide is Histidine ammonia-lyase (Staphylococcus aureus (strain bovine RF122 / ET3-1)).